A 311-amino-acid polypeptide reads, in one-letter code: Malate dehydrogenase (311 aa).

NAD(+) contacts are provided by residues glycine 7–glycine 13 and aspartate 34. Substrate-binding residues include arginine 81 and arginine 87. Residues asparagine 94 and isoleucine 117–asparagine 119 each bind NAD(+). Residues asparagine 119 and arginine 153 each contribute to the substrate site. Catalysis depends on histidine 177, which acts as the Proton acceptor. An NAD(+)-binding site is contributed by methionine 227.

The protein belongs to the LDH/MDH superfamily. MDH type 1 family. In terms of assembly, homodimer.

The enzyme catalyses (S)-malate + NAD(+) = oxaloacetate + NADH + H(+). Its function is as follows. Catalyzes the reversible oxidation of malate to oxaloacetate. The protein is Malate dehydrogenase of Aliivibrio fischeri (strain MJ11) (Vibrio fischeri).